The chain runs to 70 residues: Protein SlyX homolog (70 aa).

It belongs to the SlyX family.

The chain is Protein SlyX homolog from Shewanella pealeana (strain ATCC 700345 / ANG-SQ1).